The chain runs to 73 residues: Adipokinetic prohormone type 2 (73 aa).

Positions 1 to 20 are cleaved as a signal peptide; that stretch reads MCRIFIVLLVVAALAIIIEG. A Pyrrolidone carboxylic acid modification is found at Gln21. Position 30 is an asparagine amide (Asn30). The propeptide occupies 34–73; it reads SISSEQINDDCNPEEAIFQIYKLIVSEGERIRACQRDGKM.

As to expression, expressed in corpora cardiaca (CC), corpora allata (CA) and gnathal ganglion (GNG) (at protein level). Expression in CC and CA detected in all animals, expression in GNG detected in few animals (at protein level). Not expressed in antennal lobe (AL) (at protein level).

The protein localises to the secreted. This hormone, released from cells in the corpora cardiaca, causes release of diglycerides from the fat body and stimulation of muscles to use these diglycerides as an energy source during energy-demanding processes. The chain is Adipokinetic prohormone type 2 from Agrotis ipsilon (Black cutworm moth).